The following is a 1066-amino-acid chain: Isoleucine--tRNA ligase (1066 aa).

The 'HIGH' region motif lies at 49–59 (PYVSGAIHLGT). Positions 625 to 629 (KMSKS) match the 'KMSKS' region motif. Residue K628 coordinates ATP.

This sequence belongs to the class-I aminoacyl-tRNA synthetase family. IleS type 2 subfamily. Monomer. Requires Zn(2+) as cofactor.

The protein localises to the cytoplasm. The catalysed reaction is tRNA(Ile) + L-isoleucine + ATP = L-isoleucyl-tRNA(Ile) + AMP + diphosphate. In terms of biological role, catalyzes the attachment of isoleucine to tRNA(Ile). As IleRS can inadvertently accommodate and process structurally similar amino acids such as valine, to avoid such errors it has two additional distinct tRNA(Ile)-dependent editing activities. One activity is designated as 'pretransfer' editing and involves the hydrolysis of activated Val-AMP. The other activity is designated 'posttransfer' editing and involves deacylation of mischarged Val-tRNA(Ile). This chain is Isoleucine--tRNA ligase, found in Pyrococcus horikoshii (strain ATCC 700860 / DSM 12428 / JCM 9974 / NBRC 100139 / OT-3).